The following is a 173-amino-acid chain: Mesencephalic astrocyte-derived neurotrophic factor homolog (173 aa).

Positions 1-22 (MKTWHMVVVIGFLATLAQTSLA) are cleaved as a signal peptide. Disulfide bonds link Cys28/Cys114, Cys31/Cys103, Cys61/Cys72, and Cys148/Cys151.

The protein belongs to the ARMET family.

Its subcellular location is the secreted. In terms of biological role, required during the maturation of the embryonic nervous system for maintenance of neuronal and cuticular connectivity. Essential for maintenance of dopaminergic neurons and dopamine levels. The protein is Mesencephalic astrocyte-derived neurotrophic factor homolog of Drosophila sechellia (Fruit fly).